Here is a 301-residue protein sequence, read N- to C-terminus: Bifunctional protein FolD (301 aa).

NADP(+) contacts are provided by residues 166-168 (GKS), serine 191, and isoleucine 232.

The protein belongs to the tetrahydrofolate dehydrogenase/cyclohydrolase family. Homodimer.

It catalyses the reaction (6R)-5,10-methylene-5,6,7,8-tetrahydrofolate + NADP(+) = (6R)-5,10-methenyltetrahydrofolate + NADPH. The catalysed reaction is (6R)-5,10-methenyltetrahydrofolate + H2O = (6R)-10-formyltetrahydrofolate + H(+). The protein operates within one-carbon metabolism; tetrahydrofolate interconversion. Its function is as follows. Catalyzes the oxidation of 5,10-methylenetetrahydrofolate to 5,10-methenyltetrahydrofolate and then the hydrolysis of 5,10-methenyltetrahydrofolate to 10-formyltetrahydrofolate. The sequence is that of Bifunctional protein FolD from Orientia tsutsugamushi (strain Boryong) (Rickettsia tsutsugamushi).